A 215-amino-acid polypeptide reads, in one-letter code: NAD(P)H-quinone oxidoreductase subunit I (215 aa).

4Fe-4S ferredoxin-type domains lie at 55–84 (GRIH…VDWV) and 95–124 (RNYS…MTEE). Residues cysteine 64, cysteine 67, cysteine 70, cysteine 74, cysteine 104, cysteine 107, cysteine 110, and cysteine 114 each coordinate [4Fe-4S] cluster. Residues 169–180 (MDPHGVASDRPR) show a composition bias toward basic and acidic residues. Positions 169–215 (MDPHGVASDRPRAGQLPAQVLETLTPPAKPTAKNDGQSSSEAKEGDA) are disordered.

It belongs to the complex I 23 kDa subunit family. In terms of assembly, NDH-1 is composed of at least 11 different subunits. It depends on [4Fe-4S] cluster as a cofactor.

It localises to the cellular thylakoid membrane. It catalyses the reaction a plastoquinone + NADH + (n+1) H(+)(in) = a plastoquinol + NAD(+) + n H(+)(out). The enzyme catalyses a plastoquinone + NADPH + (n+1) H(+)(in) = a plastoquinol + NADP(+) + n H(+)(out). In terms of biological role, NDH-1 shuttles electrons from an unknown electron donor, via FMN and iron-sulfur (Fe-S) centers, to quinones in the respiratory and/or the photosynthetic chain. The immediate electron acceptor for the enzyme in this species is believed to be plastoquinone. Couples the redox reaction to proton translocation, and thus conserves the redox energy in a proton gradient. The protein is NAD(P)H-quinone oxidoreductase subunit I of Synechococcus sp. (strain CC9605).